The chain runs to 598 residues: UvrABC system protein C (598 aa).

The GIY-YIG domain occupies 14-91; the sequence is DSPGCYLHKD…IQKNMPKYNI (78 aa). The UVR domain occupies 196 to 231; the sequence is DKIIEDLRSKMLAASEEMAFERAAEYRDLISGIATM.

It belongs to the UvrC family. As to quaternary structure, interacts with UvrB in an incision complex.

It is found in the cytoplasm. The UvrABC repair system catalyzes the recognition and processing of DNA lesions. UvrC both incises the 5' and 3' sides of the lesion. The N-terminal half is responsible for the 3' incision and the C-terminal half is responsible for the 5' incision. The sequence is that of UvrABC system protein C from Streptococcus pyogenes serotype M18 (strain MGAS8232).